The following is a 460-amino-acid chain: tRNA-2-methylthio-N(6)-dimethylallyladenosine synthase (460 aa).

The 117-residue stretch at 10–126 (GSYWITTFGC…LEVLLNRVDS (117 aa)) folds into the MTTase N-terminal domain. Positions 19, 55, 89, 161, 165, and 168 each coordinate [4Fe-4S] cluster. One can recognise a Radical SAM core domain in the interval 147 to 384 (RDSSICGWVN…NALVERCARE (238 aa)). The 69-residue stretch at 387–455 (ARYAGRTEEV…SFSLSGTPLP (69 aa)) folds into the TRAM domain.

It belongs to the methylthiotransferase family. MiaB subfamily. In terms of assembly, monomer. [4Fe-4S] cluster is required as a cofactor.

The protein localises to the cytoplasm. It catalyses the reaction N(6)-dimethylallyladenosine(37) in tRNA + (sulfur carrier)-SH + AH2 + 2 S-adenosyl-L-methionine = 2-methylsulfanyl-N(6)-dimethylallyladenosine(37) in tRNA + (sulfur carrier)-H + 5'-deoxyadenosine + L-methionine + A + S-adenosyl-L-homocysteine + 2 H(+). Functionally, catalyzes the methylthiolation of N6-(dimethylallyl)adenosine (i(6)A), leading to the formation of 2-methylthio-N6-(dimethylallyl)adenosine (ms(2)i(6)A) at position 37 in tRNAs that read codons beginning with uridine. In Parasynechococcus marenigrum (strain WH8102), this protein is tRNA-2-methylthio-N(6)-dimethylallyladenosine synthase.